Reading from the N-terminus, the 521-residue chain is MSIQLHDKVSLLILDFGSQYTQLIARRLREYGIYCEIVPYHEKLEAIKAREPKGIILSGGPASVYEEDAFLIDKAVFELGIPVLGICYGMQLMTHYFGGVVAKAEHHEYGKAEVIFDALEGSESKLFEGCHSGKVVWMSHGDKVEKLPEGFTRIAHSTNSPFAAIAHQEKPFYAVQFHPEVVHSEEGALYLKNFALGICGCENDWNMHNFAEEQIKKIQERVKSGKVLCAVSGGVDSSVVAALLYRAIGEKLIPVFVDHGLLRAGEREAVEKMFKENLHVPLITVDASEIFLGKLKGVSDPETKRKIIGETFIEVFDVEAKKHDGIQYLAQGTLYPDVIESVSVKGPSKTIKSHHNVGGLPDWMTFELIEPLRELFKDEVRALGAELGMPREMLMRHPFPGPGLAIRIMGEVNFEDLELLRKADVIMLDELKKSGFYDKTWQAFTVLLNVRSVGVMGDNRTYDNTVCVRVVEAIDGMTATFAHLPHELLERMSTRIINEVDGINRVVYDISSKPPATIEWE.

In terms of domain architecture, Glutamine amidotransferase type-1 spans 10-204; the sequence is SLLILDFGSQ…ALGICGCEND (195 aa). C87 (nucleophile) is an active-site residue. Residues H178 and E180 contribute to the active site. The 192-residue stretch at 205–396 folds into the GMPS ATP-PPase domain; that stretch reads WNMHNFAEEQ…LGMPREMLMR (192 aa). Residue 232–238 coordinates ATP; it reads SGGVDSS.

In terms of assembly, homodimer.

The enzyme catalyses XMP + L-glutamine + ATP + H2O = GMP + L-glutamate + AMP + diphosphate + 2 H(+). Its pathway is purine metabolism; GMP biosynthesis; GMP from XMP (L-Gln route): step 1/1. Functionally, catalyzes the synthesis of GMP from XMP. This Wolinella succinogenes (strain ATCC 29543 / DSM 1740 / CCUG 13145 / JCM 31913 / LMG 7466 / NCTC 11488 / FDC 602W) (Vibrio succinogenes) protein is GMP synthase [glutamine-hydrolyzing].